The chain runs to 356 residues: S-adenosylmethionine:tRNA ribosyltransferase-isomerase (356 aa).

It belongs to the QueA family. In terms of assembly, monomer.

It localises to the cytoplasm. The catalysed reaction is 7-aminomethyl-7-carbaguanosine(34) in tRNA + S-adenosyl-L-methionine = epoxyqueuosine(34) in tRNA + adenine + L-methionine + 2 H(+). It functions in the pathway tRNA modification; tRNA-queuosine biosynthesis. Transfers and isomerizes the ribose moiety from AdoMet to the 7-aminomethyl group of 7-deazaguanine (preQ1-tRNA) to give epoxyqueuosine (oQ-tRNA). The protein is S-adenosylmethionine:tRNA ribosyltransferase-isomerase of Xanthomonas euvesicatoria pv. vesicatoria (strain 85-10) (Xanthomonas campestris pv. vesicatoria).